The primary structure comprises 508 residues: Pancreatic alpha-amylase 2a5 (508 aa).

A signal peptide spans 1–15 (MKFVLLLSLIGFCWA). Gln16 is modified (pyrrolidone carboxylic acid). Cystine bridges form between Cys43–Cys101, Cys85–Cys130, and Cys156–Cys172. The Ca(2+) site is built by Asn115, Arg170, and Asp179. Arg207 provides a ligand contact to chloride. The active-site Nucleophile is Asp209. Residue His213 coordinates Ca(2+). Residue Glu245 is the Proton donor of the active site. Chloride is bound by residues Asn310 and Arg349. 2 cysteine pairs are disulfide-bonded: Cys390/Cys396 and Cys462/Cys474.

Belongs to the glycosyl hydrolase 13 family. In terms of assembly, monomer. The cofactor is Ca(2+). It depends on chloride as a cofactor.

The protein localises to the secreted. Its subcellular location is the extracellular space. It carries out the reaction Endohydrolysis of (1-&gt;4)-alpha-D-glucosidic linkages in polysaccharides containing three or more (1-&gt;4)-alpha-linked D-glucose units.. This chain is Pancreatic alpha-amylase 2a5, found in Mus musculus (Mouse).